The primary structure comprises 363 residues: Uroporphyrinogen decarboxylase (363 aa).

Substrate is bound by residues 27–31, D77, Y157, T212, and H333; that span reads RQAGR.

Belongs to the uroporphyrinogen decarboxylase family. Homodimer.

The protein resides in the cytoplasm. The enzyme catalyses uroporphyrinogen III + 4 H(+) = coproporphyrinogen III + 4 CO2. The protein operates within porphyrin-containing compound metabolism; protoporphyrin-IX biosynthesis; coproporphyrinogen-III from 5-aminolevulinate: step 4/4. Its function is as follows. Catalyzes the decarboxylation of four acetate groups of uroporphyrinogen-III to yield coproporphyrinogen-III. The protein is Uroporphyrinogen decarboxylase of Cupriavidus pinatubonensis (strain JMP 134 / LMG 1197) (Cupriavidus necator (strain JMP 134)).